A 414-amino-acid polypeptide reads, in one-letter code: WW domain-containing oxidoreductase (414 aa).

Residues 1–24 form a disordered region; it reads MAALRYAGLDDTDSEDELPPGWEE. T12 carries the post-translational modification Phosphothreonine. S14 is subject to Phosphoserine. Residues 16–49 form the WW 1 domain; the sequence is DELPPGWEERTTKDGWVYYANHTEEKTQWEHPKT. Y33 is subject to Phosphotyrosine. A Nuclear localization signal motif is present at residues 50-55; sequence GKRKRV. In terms of domain architecture, WW 2 spans 57-90; it reads GDLPYGWEQGTDENGQVFFVDHINKRTTYLDPRL. Residues 125-414 are interaction with MAPT; it reads KVVVVTGANS…IQERLGSQSG (290 aa). 131-137 contributes to the NADP(+) binding site; it reads GANSGIG. The segment at 209 to 273 is mediates targeting to the mitochondria; the sequence is CNAATFALPW…RFTDINDSLG (65 aa). S260 contributes to the substrate binding site. Position 287 is a phosphotyrosine; by TNK2 (Y287). The active-site Proton acceptor is Y293.

This sequence belongs to the short-chain dehydrogenases/reductases (SDR) family. In terms of assembly, interacts with TP53, p73/TP73 and MAPK8. Interacts with MAPT/TAU, RUNX2 and HYAL2. Forms a ternary complex with TP53 and MDM2. Interacts with ERBB4, LITAF and WBP1. Interacts with DVL1, DVL2 and DVL3. May interact with FAM189B and SCOTIN. Interacts with TNK2. Interacts with TMEM207. Interacts (via WW domain) with VOPP1. In terms of processing, phosphorylated upon genotoxic stress. Phosphorylation of Tyr-33 regulates interaction with TP53, TP73 and MAPK8. May also regulate proapoptotic activity. Phosphorylation by TNK2 is associated with polyubiquitination and degradation. Ubiquitinated when phosphorylated by TNK2, leading to its degradation.

The protein resides in the cytoplasm. It localises to the nucleus. The protein localises to the mitochondrion. It is found in the golgi apparatus. Its subcellular location is the lysosome. In terms of biological role, putative oxidoreductase. Acts as a tumor suppressor and plays a role in apoptosis. May function synergistically with p53/TP53 to control genotoxic stress-induced cell death. Plays a role in TGFB1 signaling and TGFB1-mediated cell death. May also play a role in tumor necrosis factor (TNF)-mediated cell death. Required for normal bone development. Inhibits Wnt signaling, probably by sequestering DVL2 in the cytoplasm. In Pongo abelii (Sumatran orangutan), this protein is WW domain-containing oxidoreductase (WWOX).